The sequence spans 258 residues: Hydroxyethylthiazole kinase (258 aa).

Met-37 is a substrate binding site. ATP is bound by residues Arg-112 and Thr-158. Residue Ala-185 coordinates substrate.

It belongs to the Thz kinase family. Mg(2+) serves as cofactor.

It catalyses the reaction 5-(2-hydroxyethyl)-4-methylthiazole + ATP = 4-methyl-5-(2-phosphooxyethyl)-thiazole + ADP + H(+). It participates in cofactor biosynthesis; thiamine diphosphate biosynthesis; 4-methyl-5-(2-phosphoethyl)-thiazole from 5-(2-hydroxyethyl)-4-methylthiazole: step 1/1. Functionally, catalyzes the phosphorylation of the hydroxyl group of 4-methyl-5-beta-hydroxyethylthiazole (THZ). The polypeptide is Hydroxyethylthiazole kinase (Rhizobium etli (strain CIAT 652)).